Reading from the N-terminus, the 141-residue chain is Galactose-6-phosphate isomerase subunit LacA (141 aa).

Belongs to the LacAB/RpiB family. As to quaternary structure, heteromultimeric protein consisting of LacA and LacB.

It catalyses the reaction aldehydo-D-galactose 6-phosphate = keto-D-tagatose 6-phosphate. It participates in carbohydrate metabolism; D-galactose 6-phosphate degradation; D-tagatose 6-phosphate from D-galactose 6-phosphate: step 1/1. This chain is Galactose-6-phosphate isomerase subunit LacA, found in Streptococcus pneumoniae (strain Taiwan19F-14).